A 343-amino-acid chain; its full sequence is Methionine import ATP-binding protein MetN 1 (343 aa).

An ABC transporter domain is found at 2-241 (IKLTHISKVF…PKTPLAQQFI (240 aa)). An ATP-binding site is contributed by 38 to 45 (GASGAGKS).

This sequence belongs to the ABC transporter superfamily. Methionine importer (TC 3.A.1.24) family. As to quaternary structure, the complex is composed of two ATP-binding proteins (MetN), two transmembrane proteins (MetI) and a solute-binding protein (MetQ).

The protein localises to the cell inner membrane. It catalyses the reaction L-methionine(out) + ATP + H2O = L-methionine(in) + ADP + phosphate + H(+). It carries out the reaction D-methionine(out) + ATP + H2O = D-methionine(in) + ADP + phosphate + H(+). Functionally, part of the ABC transporter complex MetNIQ involved in methionine import. Responsible for energy coupling to the transport system. This Yersinia pestis bv. Antiqua (strain Antiqua) protein is Methionine import ATP-binding protein MetN 1.